We begin with the raw amino-acid sequence, 160 residues long: uncharacterized protein (160 aa).

Residues Cys26, Cys28, Cys50, and His61 each coordinate Zn(2+). Residues 26–69 (CWCGEEIITFTSKTKENPYRRFYRCAIAMKRENEEHLFKWVDEA) form a GRF-type; atypical zinc finger.

This is an uncharacterized protein from Arabidopsis thaliana (Mouse-ear cress).